The following is a 343-amino-acid chain: MRSTKVIHIVGCHAEGEVGDVIVGGVAPPPGKTVWEQSRFIASDETLRNFVLNEPRGGVFRHVNLLVPPKDPRAQMGFIIMEPADTPPMSGSNSICVSTVLLDSGIIPMQEPVTRMVLEAPGGLIEVEAECRNGKAERISVRNVPSFADRLNASLEVEGLGTITVDTAYGGDSFVIVDAASIGMKIEPGQARELAEIGVKITKAANEQLGFRHPEKDWNHISFCQITEPVTRDGDILTGVNTVAIRPAKLDRSPTGTGCSARMAVLHAKGQMKVGERFIGKSVLGTEFHCRLDKTLELGGKPAISPIISGRAWVTGTSQLMLDPSDPFPSGYRLSDTWPNMPE.

Ser90 functions as the Proton acceptor in the catalytic mechanism. Substrate contacts are provided by residues 91–92 (GS), Asp251, and 256–257 (GT).

It belongs to the proline racemase family.

It catalyses the reaction trans-4-hydroxy-L-proline = cis-4-hydroxy-D-proline. Its function is as follows. Catalyzes the epimerization of trans-4-hydroxy-L-proline (t4LHyp) to cis-4-hydroxy-D-proline (c4DHyp) in vitro, albeit with low efficiency. The physiological substrate may be different. Displays no proline racemase activity. The sequence is that of 4-hydroxyproline 2-epimerase 1 from Brucella anthropi (strain ATCC 49188 / DSM 6882 / CCUG 24695 / JCM 21032 / LMG 3331 / NBRC 15819 / NCTC 12168 / Alc 37) (Ochrobactrum anthropi).